The sequence spans 115 residues: Insulin-like peptide IlO1_i1 (115 aa).

The signal sequence occupies residues Met-1–Gly-20. Disulfide bonds link Cys-40–Cys-101, Cys-52–Cys-114, and Cys-100–Cys-105. Positions Arg-59–Arg-93 are cleaved as a propeptide — c peptide.

Belongs to the insulin family. Expressed in tentacles.

Its subcellular location is the secreted. In terms of biological role, heterodimer with unknown function. Surprisingly, the truncated synthetic analog (dimer of 27-58 and 94-115) does not bind to long insulin receptor (HIR-B) and insulin-like growth factor 1 receptor. This truncated synthetic analog shows very weak inhibitory activity on different voltage-gated channels. In Oulactis sp. (Sea anemone), this protein is Insulin-like peptide IlO1_i1.